The following is a 178-amino-acid chain: Translation initiation factor IF-3 (178 aa).

A disordered region spans residues 1–20; sequence MRRPFKTDAPVKDGPRSNRE.

The protein belongs to the IF-3 family. As to quaternary structure, monomer.

The protein resides in the cytoplasm. In terms of biological role, IF-3 binds to the 30S ribosomal subunit and shifts the equilibrium between 70S ribosomes and their 50S and 30S subunits in favor of the free subunits, thus enhancing the availability of 30S subunits on which protein synthesis initiation begins. In Rhizobium leguminosarum bv. trifolii (strain WSM2304), this protein is Translation initiation factor IF-3.